A 323-amino-acid polypeptide reads, in one-letter code: Sphingolipid delta(4)-desaturase DES1 (323 aa).

Glycine 2 is lipidated: N-myristoyl glycine. Transmembrane regions (helical) follow at residues serine 41 to valine 61 and tryptophan 68 to isoleucine 88. Positions histidine 89 to histidine 93 match the Histidine box-1 motif. A helical membrane pass occupies residues alanine 102–valine 122. Residues histidine 128 to histidine 132 carry the Histidine box-2 motif. Helical transmembrane passes span phenylalanine 152–phenylalanine 172, tyrosine 184–leucine 204, and leucine 209–phenylalanine 229. Positions histidine 259–histidine 263 match the Histidine box-3 motif. Serine 307 carries the post-translational modification Phosphoserine.

Belongs to the fatty acid desaturase type 1 family. DEGS subfamily. In terms of assembly, interacts with RLBP1; the interaction increases synthesis of chromophore-precursors by DEGS1. Post-translationally, myristoylation can target the enzyme to the mitochondria leading to an increase in ceramide levels.

It localises to the mitochondrion membrane. Its subcellular location is the endoplasmic reticulum membrane. It catalyses the reaction an N-acylsphinganine + 2 Fe(II)-[cytochrome b5] + O2 + 2 H(+) = an N-acylsphing-4-enine + 2 Fe(III)-[cytochrome b5] + 2 H2O. The catalysed reaction is all-trans-retinol = 11-cis-retinol. The enzyme catalyses all-trans-retinol = 9-cis-retinol. It carries out the reaction all-trans-retinol = 13-cis-retinol. It catalyses the reaction 11-cis-retinol = 13-cis-retinol. The catalysed reaction is 11-cis-retinol = 9-cis-retinol. Has sphingolipid-delta-4-desaturase activity. Converts D-erythro-sphinganine to D-erythro-sphingosine (E-sphing-4-enine). Catalyzes the equilibrium isomerization of retinols. This is Sphingolipid delta(4)-desaturase DES1 (DEGS1) from Bos taurus (Bovine).